Reading from the N-terminus, the 214-residue chain is Adenylate kinase (214 aa).

Residue Gly-10–Thr-15 participates in ATP binding. Residues Ser-30–Val-59 form an NMP region. AMP is bound by residues Thr-31, Arg-36, Gln-57–Val-59, Gly-85–Arg-88, and Gln-92. An LID region spans residues Gly-122 to Asp-159. ATP contacts are provided by residues Arg-123 and Val-132–Tyr-133. Arg-156 and Arg-167 together coordinate AMP. Gln-200 serves as a coordination point for ATP.

It belongs to the adenylate kinase family. Monomer.

It is found in the cytoplasm. The catalysed reaction is AMP + ATP = 2 ADP. The protein operates within purine metabolism; AMP biosynthesis via salvage pathway; AMP from ADP: step 1/1. Catalyzes the reversible transfer of the terminal phosphate group between ATP and AMP. Plays an important role in cellular energy homeostasis and in adenine nucleotide metabolism. This chain is Adenylate kinase, found in Shewanella halifaxensis (strain HAW-EB4).